A 241-amino-acid polypeptide reads, in one-letter code: Translation initiation factor IF-3 (241 aa).

Positions 193–203 are enriched in basic and acidic residues; it reads AAEKARQKAIQ. The interval 193-241 is disordered; sequence AAEKARQKAIQEGRAAPAQDDTEDEEIEKLERELEEQDDEDDDEAEATE. Acidic residues predominate over residues 212–241; the sequence is DDTEDEEIEKLERELEEQDDEDDDEAEATE.

Belongs to the IF-3 family. Monomer.

Its subcellular location is the cytoplasm. Functionally, IF-3 binds to the 30S ribosomal subunit and shifts the equilibrium between 70S ribosomes and their 50S and 30S subunits in favor of the free subunits, thus enhancing the availability of 30S subunits on which protein synthesis initiation begins. The polypeptide is Translation initiation factor IF-3 (Sorangium cellulosum (strain So ce56) (Polyangium cellulosum (strain So ce56))).